Here is a 433-residue protein sequence, read N- to C-terminus: Divalent metal cation transporter MntH (433 aa).

11 consecutive transmembrane segments (helical) span residues 32–52 (LIFAGPAVVASIAYMDPGNFA), 62–82 (GYDLLWVVLLASLIAMLFQGL), 101–121 (TLPPALTIPMWIISEIAAMAT), 131–151 (IGIALLAHLPLMAGMAITGIV), 168–188 (LVIGALVGVIALCYLAELLIV), 209–229 (ALTIAVGIVGATVMPHALFLH), 256–276 (VLAALGVAGMVNMAMVAMAAG), 296–316 (SPLLGAGAAVIFLISLLASGV), 345–365 (ALTMIPGFVVIGLGVNPTRAL), 366–386 (VLSQVVLSLALPVPMLALLWF), and 401–421 (ITAIAAIGGAIVILGLNVILL).

It belongs to the NRAMP family.

It is found in the cell inner membrane. H(+)-stimulated, divalent metal cation uptake system. This is Divalent metal cation transporter MntH from Acidiphilium cryptum (strain JF-5).